An 84-amino-acid polypeptide reads, in one-letter code: Putative membrane protein insertion efficiency factor (84 aa).

It belongs to the UPF0161 family.

The protein localises to the cell inner membrane. Could be involved in insertion of integral membrane proteins into the membrane. This chain is Putative membrane protein insertion efficiency factor, found in Acidiphilium cryptum (strain JF-5).